Here is a 1088-residue protein sequence, read N- to C-terminus: RNA-directed RNA polymerase (1088 aa).

The 187-residue stretch at 501 to 687 folds into the RdRp catalytic domain; it reads LSYGDVTRFL…AKRYIAGGKI (187 aa).

The protein belongs to the reoviridae RNA-directed RNA polymerase family. In terms of assembly, interacts with VP3 (Potential). Interacts with VP2; this interaction activates VP1. Interacts with NSP5; this interaction is probably necessary for the formation of functional virus factories. Interacts with NSP2; this interaction is weak. Mg(2+) is required as a cofactor.

The protein resides in the virion. It carries out the reaction RNA(n) + a ribonucleoside 5'-triphosphate = RNA(n+1) + diphosphate. RNA-directed RNA polymerase that is involved in both transcription and genome replication. Together with VP3 capping enzyme, forms an enzyme complex positioned near the channels situated at each of the five-fold vertices of the core. Following infection, the outermost layer of the virus is lost, leaving a double-layered particle (DLP) made up of the core and VP6 shell. VP1 then catalyzes the transcription of fully conservative plus-strand genomic RNAs that are extruded through the DLP's channels into the cytoplasm where they function as mRNAs for translation of viral proteins. One copy of each of the viral (+)RNAs is also recruited during core assembly, together with newly synthesized polymerase complexes and VP2. The polymerase of these novo-formed particles catalyzes the synthesis of complementary minus-strands leading to dsRNA formation. To do so, the polymerase specifically recognizes and binds 4 bases 5'-UGUG-3' in the conserved 3'-sequence of plus-strand RNA templates. VP2 presumably activates the autoinhibited VP1-RNA complex to coordinate packaging and genome replication. Once dsRNA synthesis is complete, the polymerase switches to the transcriptional mode, thus providing secondary transcription. The sequence is that of RNA-directed RNA polymerase from Rotavirus A (strain RVA/SA11-Both/G3P5B[2]) (RV-A).